Consider the following 426-residue polypeptide: Mitochondrial distribution and morphology protein 12 (426 aa).

One can recognise an SMP-LTD domain in the interval 1–426 (MSIEVDWKTA…VFPSFWTFLI (426 aa)). Disordered stretches follow at residues 88–147 (AHGN…GTPG), 185–264 (WTDH…FRFP), and 346–370 (ADDQETRDKDDHPRSGLDPTTSPKR). Residues 96 to 109 (THSELNEPPYRDEV) are compositionally biased toward basic and acidic residues. Residues 216–236 (SSNPTSRPSTSSTLPSHPSGS) are compositionally biased toward low complexity. Basic and acidic residues-rich tracts occupy residues 244 to 264 (SHPEEEHLDDPAEPDHPFRFP) and 349 to 360 (QETRDKDDHPRS).

Belongs to the MDM12 family. As to quaternary structure, component of the ER-mitochondria encounter structure (ERMES) or MDM complex, composed of mmm1, mdm10, mdm12 and mdm34. A mmm1 homodimer associates with one molecule of mdm12 on each side in a pairwise head-to-tail manner, and the SMP-LTD domains of mmm1 and mdm12 generate a continuous hydrophobic tunnel for phospholipid trafficking.

The protein resides in the mitochondrion outer membrane. The protein localises to the endoplasmic reticulum membrane. Its function is as follows. Component of the ERMES/MDM complex, which serves as a molecular tether to connect the endoplasmic reticulum (ER) and mitochondria. Components of this complex are involved in the control of mitochondrial shape and protein biogenesis, and function in nonvesicular lipid trafficking between the ER and mitochondria. Mdm12 is required for the interaction of the ER-resident membrane protein mmm1 and the outer mitochondrial membrane-resident beta-barrel protein mdm10. The mdm12-mmm1 subcomplex functions in the major beta-barrel assembly pathway that is responsible for biogenesis of all mitochondrial outer membrane beta-barrel proteins, and acts in a late step after the SAM complex. The mdm10-mdm12-mmm1 subcomplex further acts in the TOM40-specific pathway after the action of the mdm12-mmm1 complex. Essential for establishing and maintaining the structure of mitochondria and maintenance of mtDNA nucleoids. The protein is Mitochondrial distribution and morphology protein 12 of Aspergillus terreus (strain NIH 2624 / FGSC A1156).